Reading from the N-terminus, the 119-residue chain is Large ribosomal subunit protein bL20 (119 aa).

The protein belongs to the bacterial ribosomal protein bL20 family.

In terms of biological role, binds directly to 23S ribosomal RNA and is necessary for the in vitro assembly process of the 50S ribosomal subunit. It is not involved in the protein synthesizing functions of that subunit. This chain is Large ribosomal subunit protein bL20, found in Streptococcus uberis (strain ATCC BAA-854 / 0140J).